The primary structure comprises 151 residues: Hemoglobin-2 (151 aa).

Thr-2 is modified (N-acetylthreonine). The region spanning 3-148 is the Globin domain; it reads TLTNPQKAAI…ICKTLGDYMK (146 aa). His-97 lines the heme b pocket.

It belongs to the globin family. Homotetramer.

The protein localises to the cytoplasm. The polypeptide is Hemoglobin-2 (Phacoides pectinatus (Thick lucine)).